The sequence spans 206 residues: Probable GTP-binding protein EngB (206 aa).

Residues glutamine 24–leucine 198 form the EngB-type G domain. Residues glycine 32–serine 39, glycine 59–leucine 63, aspartate 77–glycine 80, threonine 144–aspartate 147, and phenylalanine 177–alanine 179 contribute to the GTP site. Mg(2+)-binding residues include serine 39 and threonine 61.

The protein belongs to the TRAFAC class TrmE-Era-EngA-EngB-Septin-like GTPase superfamily. EngB GTPase family. It depends on Mg(2+) as a cofactor.

In terms of biological role, necessary for normal cell division and for the maintenance of normal septation. This is Probable GTP-binding protein EngB from Alkalilimnicola ehrlichii (strain ATCC BAA-1101 / DSM 17681 / MLHE-1).